Consider the following 182-residue polypeptide: UPF0301 protein MCA0413 1 (182 aa).

This sequence belongs to the UPF0301 (AlgH) family.

This Methylococcus capsulatus (strain ATCC 33009 / NCIMB 11132 / Bath) protein is UPF0301 protein MCA0413 1.